The sequence spans 523 residues: Apolipoprotein N-acyltransferase (523 aa).

The next 7 helical transmembrane spans lie at 26–46 (LRFA…AFAP), 49–66 (WWWL…LVRQ), 74–94 (AWVG…WLYI), 109–129 (AAVL…AWLW), 137–157 (QLSG…SEWL), 185–205 (LVGV…LCAA), and 212–232 (WLAG…HTIA). In terms of domain architecture, CN hydrolase spans 246–487 (LQGNVPQDVK…LGTLQADVQG (242 aa)). Glutamate 284 serves as the catalytic Proton acceptor. Lysine 345 is a catalytic residue. Residue cysteine 395 is the Nucleophile of the active site. The chain crosses the membrane as a helical span at residues 494–514 (FVRTGNAPALGAGVLVLLAAL).

It belongs to the CN hydrolase family. Apolipoprotein N-acyltransferase subfamily.

Its subcellular location is the cell inner membrane. It carries out the reaction N-terminal S-1,2-diacyl-sn-glyceryl-L-cysteinyl-[lipoprotein] + a glycerophospholipid = N-acyl-S-1,2-diacyl-sn-glyceryl-L-cysteinyl-[lipoprotein] + a 2-acyl-sn-glycero-3-phospholipid + H(+). Its pathway is protein modification; lipoprotein biosynthesis (N-acyl transfer). Its function is as follows. Catalyzes the phospholipid dependent N-acylation of the N-terminal cysteine of apolipoprotein, the last step in lipoprotein maturation. The protein is Apolipoprotein N-acyltransferase of Ralstonia nicotianae (strain ATCC BAA-1114 / GMI1000) (Ralstonia solanacearum).